Consider the following 374-residue polypeptide: 4-galactosyl-N-acetylglucosaminide 3-alpha-L-fucosyltransferase FUT5 (374 aa).

Over 1-15 the chain is Cytoplasmic; sequence MDPLGPAKPQWLWRR. Residues 16-34 form a helical; Signal-anchor for type II membrane protein membrane-spanning segment; that stretch reads CLAGLLFQLLVAVCFFSYL. Topologically, residues 35-374 are lumenal; that stretch reads RVSQDHATGS…TVRSIAAWFT (340 aa). Residues asparagine 60, asparagine 105, asparagine 167, and asparagine 198 are each glycosylated (N-linked (GlcNAc...) asparagine).

It belongs to the glycosyltransferase 10 family.

The protein resides in the golgi apparatus. It localises to the golgi stack membrane. The catalysed reaction is a beta-D-galactosyl-(1-&gt;3)-N-acetyl-beta-D-glucosaminyl derivative + GDP-beta-L-fucose = a beta-D-galactosyl-(1-&gt;3)-[alpha-L-fucosyl-(1-&gt;4)]-N-acetyl-beta-D-glucosaminyl derivative + GDP + H(+). It carries out the reaction an N-acetyl-alpha-neuraminyl-(2-&gt;3)-beta-D-galactosyl-(1-&gt;4)-N-acetyl-beta-D-glucosaminyl derivative + GDP-beta-L-fucose = an alpha-Neu5Ac-(2-&gt;3)-beta-D-Gal-(1-&gt;4)-[alpha-L-Fuc-(1-&gt;3)]-beta-D-GlcNAc derivative + GDP + H(+). The enzyme catalyses an alpha-Neu5Ac-(2-&gt;3)-beta-D-Gal-(1-&gt;4)-beta-D-GlcNAc-(1-&gt;3)-beta-D-Gal-(1-&gt;4)-[alpha-L-Fuc-(1-&gt;3)]-beta-D-GlcNAc derivative + GDP-beta-L-fucose = an alpha-Neu5Ac-(2-&gt;3)-beta-D-Gal-(1-&gt;4)-[alpha-L-Fuc-(1-&gt;3)]-beta-D-GlcNAc-(1-&gt;3)-beta-D-Gal-(1-&gt;4)-[alpha-L-Fuc-(1-&gt;3)]-beta-D-GlcNAc derivative + GDP + H(+). It catalyses the reaction a beta-D-galactosyl-(1-&gt;4)-N-acetyl-beta-D-glucosaminyl derivative + GDP-beta-L-fucose = a beta-D-galactosyl-(1-&gt;4)-[alpha-L-fucosyl-(1-&gt;3)]-N-acetyl-beta-D-glucosaminyl derivative + GDP + H(+). The catalysed reaction is a neolactoside nLc4Cer + GDP-beta-L-fucose = a neolactoside III(3)-alpha-Fuc-nLc4Cer + GDP + H(+). It carries out the reaction a neolactoside nLc6Cer + GDP-beta-L-fucose = beta-D-galactosyl-(1-&gt;4)-N-acetyl-beta-D-glucosaminyl-(1-&gt;3)-beta-D-galactosyl-(1-&gt;4)-[alpha-L-fucosyl-(1-&gt;3)]-N-acetyl-beta-D-glucosaminyl-(1-&gt;3)-beta-D-galactosyl-(1-&gt;4)-beta-D-glucosyl-(1&lt;-&gt;1')-ceramide + GDP + H(+). The enzyme catalyses a neolactoside nLc6Cer(d18:1(4E)) + GDP-beta-L-fucose = a neolactoside III(3)-alpha-Fuc-nLc6Cer(d18:1(4E)) + GDP + H(+). It catalyses the reaction a neolactoside nLc4Cer(d18:1(4E)) + GDP-beta-L-fucose = a neolactoside III(3)-alpha-Fuc-nLc4Cer(d18:1(4E)) + GDP + H(+). The catalysed reaction is a neolactoside VI(3)-alpha-NeuNAc-nLc6Cer + GDP-beta-L-fucose = a neolactoside VI(3)-alpha-NeuAc,III(3)-alphaFuc-nLc6Cer + GDP + H(+). It carries out the reaction beta-D-galactosyl-(1-&gt;4)-N-acetyl-D-glucosamine + GDP-beta-L-fucose = beta-D-galactosyl-(1-&gt;4)-[alpha-L-fucosyl-(1-&gt;3)]-N-acetyl-D-glucosamine + GDP + H(+). The enzyme catalyses N-acetyl-alpha-neuraminosyl-(2-&gt;3)-beta-D-galactosyl-(1-&gt;4)-N-acetyl-beta-D-glucosamine + GDP-beta-L-fucose = N-acetyl-alpha-neuraminosyl-(2-&gt;3)-beta-D-galactosyl-(1-&gt;4)-[alpha-L-fucosyl-(1-&gt;3)]-N-acetyl-beta-D-glucosamine + GDP + H(+). It catalyses the reaction alpha-L-Fuc-(1-&gt;2)-beta-D-Gal-(1-&gt;4)-D-GlcNAc + GDP-beta-L-fucose = alpha-L-Fuc-(1-&gt;2)-beta-D-Gal-(1-&gt;4)-[alpha-L-Fuc-(1-&gt;3)]-D-GlcNAc + GDP + H(+). The catalysed reaction is an alpha-Neu5Ac-(2-&gt;3)-beta-D-Gal-(1-&gt;3)-D-GlcNAc derivative + GDP-beta-L-fucose = an alpha-Neu5Ac-(2-&gt;3)-beta-D-Gal-(1-&gt;3)-[alpha-L-Fuc-(1-&gt;4)]-beta-D-GlcNAc derivative + GDP + H(+). Its pathway is protein modification; protein glycosylation. In terms of biological role, catalyzes preferentially the transfer of L-fucose, from a guanosine diphosphate-beta-L-fucose, to the N-acetyl-beta-D-glucosamine (GlcNAc) of an N-acetyllactosamine unit (type 2 chain) of an oligosaccharide, or a glycoprotein- and a glycolipid-linked N-acetyllactosamine unit via an alpha (1,3) linkage and participates in the surface expression of VIM-2, Lewis X/SSEA-1 and sialyl Lewis X antigens. Preferentially transfers fucose to the GlcNAc of an internal N-acetyllactosamine unit of a poly-N-acetyllactosamine chain acceptor substrate. Also catalyzes to a lesser extend the transfer of L-fucose to the GlcNAc of a type 1 (beta-D-galactosyl-(1-&gt;3)-N-acetyl-beta-D-glucosaminyl) or H-type 1 (alpha-L-Fuc-(1-&gt;2)-beta-D-Gal-(1-&gt;3)-D-GlcNAc) chain oligosaccharide via an alpha (1,4) linkage. Preferentially catalyzes sialylated type 2 oligosaccharide acceptors over neutral type 2 or H type 2 (alpha-L-Fuc-(1-&gt;2)-beta-D-Gal-(1-&gt;4)-D-GlcNAc) oligosaccharide acceptors. Lactose-based structures are also acceptor substrates. In Gorilla gorilla gorilla (Western lowland gorilla), this protein is 4-galactosyl-N-acetylglucosaminide 3-alpha-L-fucosyltransferase FUT5.